Reading from the N-terminus, the 217-residue chain is Ribosomal RNA large subunit methyltransferase E (217 aa).

S-adenosyl-L-methionine-binding residues include Gly64, Trp66, Asp92, Asp108, and Asp133. Lys173 serves as the catalytic Proton acceptor.

Belongs to the class I-like SAM-binding methyltransferase superfamily. RNA methyltransferase RlmE family.

It is found in the cytoplasm. The enzyme catalyses uridine(2552) in 23S rRNA + S-adenosyl-L-methionine = 2'-O-methyluridine(2552) in 23S rRNA + S-adenosyl-L-homocysteine + H(+). In terms of biological role, specifically methylates the uridine in position 2552 of 23S rRNA at the 2'-O position of the ribose in the fully assembled 50S ribosomal subunit. This chain is Ribosomal RNA large subunit methyltransferase E, found in Delftia acidovorans (strain DSM 14801 / SPH-1).